Consider the following 301-residue polypeptide: Sulfate adenylyltransferase subunit 2 (301 aa).

This sequence belongs to the PAPS reductase family. CysD subfamily. In terms of assembly, heterodimer composed of CysD, the smaller subunit, and CysN.

It catalyses the reaction sulfate + ATP + H(+) = adenosine 5'-phosphosulfate + diphosphate. Its pathway is sulfur metabolism; hydrogen sulfide biosynthesis; sulfite from sulfate: step 1/3. Its function is as follows. With CysN forms the ATP sulfurylase (ATPS) that catalyzes the adenylation of sulfate producing adenosine 5'-phosphosulfate (APS) and diphosphate, the first enzymatic step in sulfur assimilation pathway. APS synthesis involves the formation of a high-energy phosphoric-sulfuric acid anhydride bond driven by GTP hydrolysis by CysN coupled to ATP hydrolysis by CysD. This Shewanella loihica (strain ATCC BAA-1088 / PV-4) protein is Sulfate adenylyltransferase subunit 2.